The following is a 280-amino-acid chain: Polyamine aminopropyltransferase 2 (280 aa).

The PABS domain maps to 2–237 (ELWLDEALEL…GIIGFTYCSK (236 aa)). Glutamine 33 is a binding site for S-methyl-5'-thioadenosine. Residues histidine 64 and aspartate 88 each coordinate spermidine. S-methyl-5'-thioadenosine-binding positions include glutamate 108 and 139–140 (DG). Catalysis depends on aspartate 157, which acts as the Proton acceptor. Position 157 to 160 (157 to 160 (DSSD)) interacts with spermidine. Proline 164 contributes to the S-methyl-5'-thioadenosine binding site.

The protein belongs to the spermidine/spermine synthase family. As to quaternary structure, homodimer or homotetramer.

It is found in the cytoplasm. The enzyme catalyses S-adenosyl 3-(methylsulfanyl)propylamine + putrescine = S-methyl-5'-thioadenosine + spermidine + H(+). Its pathway is amine and polyamine biosynthesis; spermidine biosynthesis; spermidine from putrescine: step 1/1. In terms of biological role, catalyzes the irreversible transfer of a propylamine group from the amino donor S-adenosylmethioninamine (decarboxy-AdoMet) to putrescine (1,4-diaminobutane) to yield spermidine. In Leptospira interrogans serogroup Icterohaemorrhagiae serovar Lai (strain 56601), this protein is Polyamine aminopropyltransferase 2.